The following is a 129-amino-acid chain: Large ribosomal subunit protein bL12 (129 aa).

Belongs to the bacterial ribosomal protein bL12 family. As to quaternary structure, homodimer. Part of the ribosomal stalk of the 50S ribosomal subunit. Forms a multimeric L10(L12)X complex, where L10 forms an elongated spine to which 2 to 4 L12 dimers bind in a sequential fashion. Binds GTP-bound translation factors.

Forms part of the ribosomal stalk which helps the ribosome interact with GTP-bound translation factors. Is thus essential for accurate translation. The chain is Large ribosomal subunit protein bL12 from Mycobacteroides abscessus (strain ATCC 19977 / DSM 44196 / CCUG 20993 / CIP 104536 / JCM 13569 / NCTC 13031 / TMC 1543 / L948) (Mycobacterium abscessus).